Consider the following 397-residue polypeptide: Enoyl-[acyl-carrier-protein] reductase [NADH] (397 aa).

NAD(+) contacts are provided by residues 47–52, 73–74, 110–111, and 138–139; these read GASTGY, LE, DA, and LA. Position 224 (Tyr224) interacts with substrate. Tyr234 (proton donor) is an active-site residue. NAD(+) contacts are provided by residues Lys243 and 272–274; that span reads LVT.

It belongs to the TER reductase family. In terms of assembly, monomer.

It catalyses the reaction a 2,3-saturated acyl-[ACP] + NAD(+) = a (2E)-enoyl-[ACP] + NADH + H(+). Its pathway is lipid metabolism; fatty acid biosynthesis. Involved in the final reduction of the elongation cycle of fatty acid synthesis (FAS II). Catalyzes the reduction of a carbon-carbon double bond in an enoyl moiety that is covalently linked to an acyl carrier protein (ACP). This is Enoyl-[acyl-carrier-protein] reductase [NADH] from Methylobacillus flagellatus (strain ATCC 51484 / DSM 6875 / VKM B-1610 / KT).